Here is a 280-residue protein sequence, read N- to C-terminus: Elongation factor Ts (280 aa).

An involved in Mg(2+) ion dislocation from EF-Tu region spans residues 82–85 (TDFV).

It belongs to the EF-Ts family.

Its subcellular location is the cytoplasm. Its function is as follows. Associates with the EF-Tu.GDP complex and induces the exchange of GDP to GTP. It remains bound to the aminoacyl-tRNA.EF-Tu.GTP complex up to the GTP hydrolysis stage on the ribosome. In Baumannia cicadellinicola subsp. Homalodisca coagulata, this protein is Elongation factor Ts.